We begin with the raw amino-acid sequence, 99 residues long: A-type ATP synthase subunit F (99 aa).

The protein belongs to the V-ATPase F subunit family. Has multiple subunits with at least A(3), B(3), C, D, E, F, H, I and proteolipid K(x).

The protein localises to the cell membrane. Functionally, component of the A-type ATP synthase that produces ATP from ADP in the presence of a proton gradient across the membrane. The sequence is that of A-type ATP synthase subunit F from Methanococcoides burtonii (strain DSM 6242 / NBRC 107633 / OCM 468 / ACE-M).